Consider the following 282-residue polypeptide: Ribosomal RNA small subunit methyltransferase A (282 aa).

The segment at 1–21 is disordered; that stretch reads MPDFPKEHATPMSNRPPAHQA. The S-adenosyl-L-methionine site is built by N28, L30, G55, E76, D101, and N126.

Belongs to the class I-like SAM-binding methyltransferase superfamily. rRNA adenine N(6)-methyltransferase family. RsmA subfamily.

It is found in the cytoplasm. It carries out the reaction adenosine(1518)/adenosine(1519) in 16S rRNA + 4 S-adenosyl-L-methionine = N(6)-dimethyladenosine(1518)/N(6)-dimethyladenosine(1519) in 16S rRNA + 4 S-adenosyl-L-homocysteine + 4 H(+). In terms of biological role, specifically dimethylates two adjacent adenosines (A1518 and A1519) in the loop of a conserved hairpin near the 3'-end of 16S rRNA in the 30S particle. May play a critical role in biogenesis of 30S subunits. The polypeptide is Ribosomal RNA small subunit methyltransferase A (Chromohalobacter salexigens (strain ATCC BAA-138 / DSM 3043 / CIP 106854 / NCIMB 13768 / 1H11)).